We begin with the raw amino-acid sequence, 140 residues long: Small ribosomal subunit protein uS12 (140 aa).

D102 is modified (3-methylthioaspartic acid). Residues 121–140 form a disordered region; sequence ANRQQSRSKYGAKKPKAAKK. Positions 130–140 are enriched in basic residues; that stretch reads YGAKKPKAAKK.

The protein belongs to the universal ribosomal protein uS12 family. In terms of assembly, part of the 30S ribosomal subunit. Contacts proteins S8 and S17. May interact with IF1 in the 30S initiation complex.

Functionally, with S4 and S5 plays an important role in translational accuracy. Its function is as follows. Interacts with and stabilizes bases of the 16S rRNA that are involved in tRNA selection in the A site and with the mRNA backbone. Located at the interface of the 30S and 50S subunits, it traverses the body of the 30S subunit contacting proteins on the other side and probably holding the rRNA structure together. The combined cluster of proteins S8, S12 and S17 appears to hold together the shoulder and platform of the 30S subunit. The sequence is that of Small ribosomal subunit protein uS12 from Alkaliphilus oremlandii (strain OhILAs) (Clostridium oremlandii (strain OhILAs)).